We begin with the raw amino-acid sequence, 185 residues long: Elongation factor P (185 aa).

The protein belongs to the elongation factor P family.

It is found in the cytoplasm. The protein operates within protein biosynthesis; polypeptide chain elongation. Functionally, involved in peptide bond synthesis. Stimulates efficient translation and peptide-bond synthesis on native or reconstituted 70S ribosomes in vitro. Probably functions indirectly by altering the affinity of the ribosome for aminoacyl-tRNA, thus increasing their reactivity as acceptors for peptidyl transferase. This is Elongation factor P from Clostridioides difficile (strain 630) (Peptoclostridium difficile).